The primary structure comprises 306 residues: Non-homologous end joining protein Ku 2 (306 aa).

Residues 21 to 206 (ISFGLVNIGV…EVSKQEIDMA (186 aa)) enclose the Ku domain. A disordered region spans residues 233-306 (LIDAKTKGTK…GSRDKTRKRA (74 aa)). Positions 274–290 (RTSRRKTTASASRRRSS) are enriched in basic residues. Over residues 291 to 300 (SNREKTGSRD) the composition is skewed to basic and acidic residues.

Belongs to the prokaryotic Ku family. In terms of assembly, homodimer. Interacts with LigD.

In terms of biological role, with LigD forms a non-homologous end joining (NHEJ) DNA repair enzyme, which repairs dsDNA breaks with reduced fidelity. Binds linear dsDNA with 5'- and 3'- overhangs but not closed circular dsDNA nor ssDNA. Recruits and stimulates the ligase activity of LigD. This chain is Non-homologous end joining protein Ku 2, found in Saccharopolyspora erythraea (strain ATCC 11635 / DSM 40517 / JCM 4748 / NBRC 13426 / NCIMB 8594 / NRRL 2338).